The following is a 611-amino-acid chain: Threonine--tRNA ligase (611 aa).

The catalytic stretch occupies residues 209 to 502; that stretch reads DHRRLGKDLE…MTENYAGDFP (294 aa). 3 residues coordinate Zn(2+): Cys302, His353, and His479.

The protein belongs to the class-II aminoacyl-tRNA synthetase family. In terms of assembly, homodimer. Zn(2+) serves as cofactor.

The protein localises to the cytoplasm. It catalyses the reaction tRNA(Thr) + L-threonine + ATP = L-threonyl-tRNA(Thr) + AMP + diphosphate + H(+). In terms of biological role, catalyzes the attachment of threonine to tRNA(Thr) in a two-step reaction: L-threonine is first activated by ATP to form Thr-AMP and then transferred to the acceptor end of tRNA(Thr). Also edits incorrectly charged L-seryl-tRNA(Thr). In Synechococcus sp. (strain CC9902), this protein is Threonine--tRNA ligase.